The chain runs to 438 residues: MTEKKPMIQALQAVRGMNDILPDEAEAWEHFEDIVRDWLRSYGYRPIRMPIVEPTPLFKRAIGEVTDIVEKEMYSFEDALNGEQLTLRPEGTASCVRAAIQHKMLSAGAQRLYYHGPMFRHERPQKGRYRQFHQIGVEALGFDGPDIDAEHILMCARLWDDFGLEDVRLELNSLGSSDERARHRAELVAYLERHRERLDDDGRRRLHTNPLRILDTKNPELQDLVDNAPKLLDFLGEDSLKHFNGVQVLLKDAGVPYRINHRLVRGLDYYNRTVFEWVTTRLGAQGTVCAGGRYDGLVEQLGGRPAPAAGFAMGIERLLALWRESGGEAEPAQPDVYVVHLGEQAQRLAFRAAEALRSHGFAVLMHCGGGSFKSQMKKADASGAPVAVVIGDDEAATGEVGLKPLRGPGGQQRVALDGLANAVAECLFTENEEEDGSL.

This sequence belongs to the class-II aminoacyl-tRNA synthetase family. As to quaternary structure, homodimer.

Its subcellular location is the cytoplasm. The enzyme catalyses tRNA(His) + L-histidine + ATP = L-histidyl-tRNA(His) + AMP + diphosphate + H(+). This chain is Histidine--tRNA ligase, found in Aromatoleum aromaticum (strain DSM 19018 / LMG 30748 / EbN1) (Azoarcus sp. (strain EbN1)).